Here is a 336-residue protein sequence, read N- to C-terminus: Holliday junction branch migration complex subunit RuvB (336 aa).

The segment at 1 to 183 is large ATPase domain (RuvB-L); it reads MATERLVAGN…FGINSRLEFY (183 aa). ATP is bound by residues L22, R23, G64, K67, T68, T69, 130 to 132, R173, Y183, and R220; that span reads EDF. T68 is a Mg(2+) binding site. Positions 184–254 are small ATPAse domain (RuvB-S); sequence QVAELEEIIR…VAREALELLQ (71 aa). Residues 257–336 are head domain (RuvB-H); it reads AAGLDSSDRR…LGIKPEDRLF (80 aa). Residues R312 and R317 each contribute to the DNA site.

This sequence belongs to the RuvB family. As to quaternary structure, homohexamer. Forms an RuvA(8)-RuvB(12)-Holliday junction (HJ) complex. HJ DNA is sandwiched between 2 RuvA tetramers; dsDNA enters through RuvA and exits via RuvB. An RuvB hexamer assembles on each DNA strand where it exits the tetramer. Each RuvB hexamer is contacted by two RuvA subunits (via domain III) on 2 adjacent RuvB subunits; this complex drives branch migration. In the full resolvosome a probable DNA-RuvA(4)-RuvB(12)-RuvC(2) complex forms which resolves the HJ.

The protein resides in the cytoplasm. It catalyses the reaction ATP + H2O = ADP + phosphate + H(+). Its function is as follows. The RuvA-RuvB-RuvC complex processes Holliday junction (HJ) DNA during genetic recombination and DNA repair, while the RuvA-RuvB complex plays an important role in the rescue of blocked DNA replication forks via replication fork reversal (RFR). RuvA specifically binds to HJ cruciform DNA, conferring on it an open structure. The RuvB hexamer acts as an ATP-dependent pump, pulling dsDNA into and through the RuvAB complex. RuvB forms 2 homohexamers on either side of HJ DNA bound by 1 or 2 RuvA tetramers; 4 subunits per hexamer contact DNA at a time. Coordinated motions by a converter formed by DNA-disengaged RuvB subunits stimulates ATP hydrolysis and nucleotide exchange. Immobilization of the converter enables RuvB to convert the ATP-contained energy into a lever motion, pulling 2 nucleotides of DNA out of the RuvA tetramer per ATP hydrolyzed, thus driving DNA branch migration. The RuvB motors rotate together with the DNA substrate, which together with the progressing nucleotide cycle form the mechanistic basis for DNA recombination by continuous HJ branch migration. Branch migration allows RuvC to scan DNA until it finds its consensus sequence, where it cleaves and resolves cruciform DNA. The sequence is that of Holliday junction branch migration complex subunit RuvB from Moorella thermoacetica (strain ATCC 39073 / JCM 9320).